A 66-amino-acid polypeptide reads, in one-letter code: Conotoxin Cal5.2 (66 aa).

A signal peptide spans 1 to 20 (MMYCLPVVCILLLLIPSSAT). Positions 21–51 (FVVESRLEKDQAQSFTGDAWKRVSPIHEMIQ) are excised as a propeptide. Residue valine 65 is modified to Valine amide.

Belongs to the conotoxin T superfamily. Contains 2 disulfide bonds that can be either 'C1-C3, C2-C4' or 'C1-C4, C2-C3', since these disulfide connectivities have been observed for conotoxins with cysteine framework V (for examples, see AC P0DQQ7 and AC P81755). In terms of tissue distribution, expressed by the venom duct.

Its subcellular location is the secreted. Functionally, probable neurotoxin with unknown target. Possibly targets ion channels. The sequence is that of Conotoxin Cal5.2 from Californiconus californicus (California cone).